The sequence spans 233 residues: Lysoplasmalogenase TMEM86B (233 aa).

The Cytoplasmic segment spans residues 1 to 30 (MPCCDPYPWIGLNVGRLSSFPLLKYPQVRR). Residues 31–47 (WLAPFIVACSLYFLLWI) form a helical membrane-spanning segment. The Extracellular segment spans residues 48–53 (PEDQPS). Residues 54-75 (WVSALVKCQPILCLVLFLWAVA) traverse the membrane as a helical segment. Residues 76–81 (PGGSYT) lie on the Cytoplasmic side of the membrane. The chain crosses the membrane as a helical span at residues 82 to 100 (WLLQGALTCSAVGDACLIW). Residues 101-106 (PEAFFY) lie on the Extracellular side of the membrane. Residues 107 to 124 (GMAVFSVAHLLYLWAFGL) traverse the membrane as a helical segment. Topologically, residues 125–130 (SPLQPG) are cytoplasmic. The helical transmembrane segment at 131 to 147 (LLLCTTLASLTYYSFLL) threads the bilayer. Residues 148–153 (LHLEPN) are Extracellular-facing. The helical transmembrane segment at 154–170 (MVLPVAAYGLILNTMLW) threads the bilayer. The Cytoplasmic segment spans residues 171–178 (RGLVLGRS). A helical transmembrane segment spans residues 179-195 (AGWGAVLFIFSDGVLAW). Residues 196 to 206 (DTFVYTLPFAR) are Extracellular-facing. The chain crosses the membrane as a helical span at residues 207-225 (LVTMSTYYAAQLLLTLSAL). Topologically, residues 226-233 (RSPGLKTH) are cytoplasmic.

Belongs to the TMEM86 family. In terms of assembly, homodimer.

Its subcellular location is the endoplasmic reticulum membrane. It is found in the cytoplasm. It catalyses the reaction a 1-O-(1Z-alkenyl)-sn-glycero-3-phosphocholine + H2O = a 2,3-saturated aldehyde + sn-glycerol 3-phosphocholine. The catalysed reaction is a 1-O-(1Z-alkenyl)-sn-glycero-3-phosphoethanolamine + H2O = a 2,3-saturated aldehyde + sn-glycero-3-phosphoethanolamine. With respect to regulation, competitively inhibited by lysophosphatidic acid. Catalyzes the hydrolysis of the vinyl ether bond of choline or ethanolamine lysoplasmalogens, forming fatty aldehyde and glycerophosphocholine or glycerophosphoethanolamine, respectively and is specific for the sn-2-deacylated (lyso) form of plasmalogen. This Rattus norvegicus (Rat) protein is Lysoplasmalogenase TMEM86B (Tmem86b).